An 87-amino-acid chain; its full sequence is Omega-theraphotoxin-Gr1a (87 aa).

The signal sequence occupies residues 1-24 (MKAQIFVVVLGLAALSVLCYGSEA). Positions 25 to 49 (DESALHEEIFQLLAASDEVPKPQER) are excised as a propeptide. 3 disulfides stabilise this stretch: cysteine 51–cysteine 65, cysteine 58–cysteine 70, and cysteine 64–cysteine 79. Valine 85 carries the valine amide modification.

As to expression, expressed by the venom gland.

Its subcellular location is the secreted. In terms of biological role, inhibits P/Q- (Cav2.1/CACNA1A) and N-type (Cav2.2/CACNA1B) voltage-gated calcium channel by modifying voltage-dependent gating. It selectively and reversibly blocks the calcium channels coupled to glutamate release. Also inhibits potassium channels (Kv2.1/KCNB1) with lower affinity. Has also been shown to weakly inhibit Kv11.1/KCNH2/ERG1, Kv1.2/KCNA2, Kv1.3/KCNA3, Nav1.5/SCN5A, Nav1.7/SCN9A and TRPV1. This Grammostola rosea (Chilean rose tarantula) protein is Omega-theraphotoxin-Gr1a.